The primary structure comprises 98 residues: Co-chaperonin GroES (98 aa).

Belongs to the GroES chaperonin family. As to quaternary structure, heptamer of 7 subunits arranged in a ring. Interacts with the chaperonin GroEL.

It is found in the cytoplasm. Together with the chaperonin GroEL, plays an essential role in assisting protein folding. The GroEL-GroES system forms a nano-cage that allows encapsulation of the non-native substrate proteins and provides a physical environment optimized to promote and accelerate protein folding. GroES binds to the apical surface of the GroEL ring, thereby capping the opening of the GroEL channel. This is Co-chaperonin GroES from Micrococcus luteus (strain ATCC 4698 / DSM 20030 / JCM 1464 / CCM 169 / CCUG 5858 / IAM 1056 / NBRC 3333 / NCIMB 9278 / NCTC 2665 / VKM Ac-2230) (Micrococcus lysodeikticus).